A 446-amino-acid chain; its full sequence is tRNA-2-methylthio-N(6)-dimethylallyladenosine synthase (446 aa).

The MTTase N-terminal domain maps to 8 to 124; the sequence is KTYRVKSFGC…LPGMIDAAVA (117 aa). 6 residues coordinate [4Fe-4S] cluster: Cys17, Cys53, Cys87, Cys160, Cys164, and Cys167. A Radical SAM core domain is found at 146–378; sequence RKSAPSAFLT…QAALNRDQAA (233 aa). In terms of domain architecture, TRAM spans 381-442; sequence AGSVGRTCEV…PNSLAGQLLE (62 aa).

Belongs to the methylthiotransferase family. MiaB subfamily. Monomer. [4Fe-4S] cluster serves as cofactor.

The protein localises to the cytoplasm. It carries out the reaction N(6)-dimethylallyladenosine(37) in tRNA + (sulfur carrier)-SH + AH2 + 2 S-adenosyl-L-methionine = 2-methylsulfanyl-N(6)-dimethylallyladenosine(37) in tRNA + (sulfur carrier)-H + 5'-deoxyadenosine + L-methionine + A + S-adenosyl-L-homocysteine + 2 H(+). In terms of biological role, catalyzes the methylthiolation of N6-(dimethylallyl)adenosine (i(6)A), leading to the formation of 2-methylthio-N6-(dimethylallyl)adenosine (ms(2)i(6)A) at position 37 in tRNAs that read codons beginning with uridine. In Erythrobacter litoralis (strain HTCC2594), this protein is tRNA-2-methylthio-N(6)-dimethylallyladenosine synthase.